Reading from the N-terminus, the 448-residue chain is Methylenetetrahydrofolate--tRNA-(uracil-5-)-methyltransferase TrmFO (448 aa).

13-18 (GAGLAG) contributes to the FAD binding site.

Belongs to the MnmG family. TrmFO subfamily. Requires FAD as cofactor.

It is found in the cytoplasm. It catalyses the reaction uridine(54) in tRNA + (6R)-5,10-methylene-5,6,7,8-tetrahydrofolate + NADH + H(+) = 5-methyluridine(54) in tRNA + (6S)-5,6,7,8-tetrahydrofolate + NAD(+). The catalysed reaction is uridine(54) in tRNA + (6R)-5,10-methylene-5,6,7,8-tetrahydrofolate + NADPH + H(+) = 5-methyluridine(54) in tRNA + (6S)-5,6,7,8-tetrahydrofolate + NADP(+). Functionally, catalyzes the folate-dependent formation of 5-methyl-uridine at position 54 (M-5-U54) in all tRNAs. The sequence is that of Methylenetetrahydrofolate--tRNA-(uracil-5-)-methyltransferase TrmFO from Streptococcus pyogenes serotype M18 (strain MGAS8232).